The sequence spans 364 residues: Alanine racemase (364 aa).

Catalysis depends on lysine 35, which acts as the Proton acceptor; specific for D-alanine. Lysine 35 is subject to N6-(pyridoxal phosphate)lysine. Arginine 130 is a binding site for substrate. Catalysis depends on tyrosine 256, which acts as the Proton acceptor; specific for L-alanine. A substrate-binding site is contributed by methionine 304.

Belongs to the alanine racemase family. Pyridoxal 5'-phosphate is required as a cofactor.

It carries out the reaction L-alanine = D-alanine. The protein operates within amino-acid biosynthesis; D-alanine biosynthesis; D-alanine from L-alanine: step 1/1. Functionally, catalyzes the interconversion of L-alanine and D-alanine. May also act on other amino acids. This Polaromonas sp. (strain JS666 / ATCC BAA-500) protein is Alanine racemase (alr).